Here is a 145-residue protein sequence, read N- to C-terminus: Large ribosomal subunit protein uL11m (145 aa).

It belongs to the universal ribosomal protein uL11 family.

It is found in the mitochondrion. This chain is Large ribosomal subunit protein uL11m (RPL11), found in Reclinomonas americana.